The following is a 343-amino-acid chain: Signal peptide peptidase 1 (343 aa).

The Lumenal segment spans residues 1–19 (MKTHERAANLALAGLSLAP). A helical membrane pass occupies residues 20 to 40 (LVVKVEPNVNVILTACLAVYV). The Cytoplasmic segment spans residues 41 to 62 (GCYRSVKPTPPSETMSKEHAMR). The chain crosses the membrane as a helical span at residues 63–83 (FPLVGSAMLLSLFLLFKFLSK). The Lumenal portion of the chain corresponds to 84-87 (DLVN). Residues 88-108 (AVLTAYFFILGIAALCATLLP) traverse the membrane as a helical segment. The Cytoplasmic segment spans residues 109 to 136 (SIKRFLPKEWNDNAIVWCAPFFHSLSVE). A helical transmembrane segment spans residues 137–157 (FTKSQVVASIPGFFFCIWYAA). At 158–160 (KKH) the chain is on the lumenal side. Residues 161–181 (WLANNVLGISFCIQGIEMLSL) traverse the membrane as a helical segment. Residues 182-188 (GSFKTGA) lie on the Cytoplasmic side of the membrane. Residues 189 to 209 (ILLAGLFFYDIFWVFFTPVMV) form a helical membrane-spanning segment. Asp198 is a catalytic residue. The Lumenal segment spans residues 210 to 230 (SVAKSFDAPIKLLFPTGDAAR). Residues 231–251 (PFSMLGLGDIVIPGIFVALAL) traverse the membrane as a helical segment. Residue Asp239 is part of the active site. The Cytoplasmic portion of the chain corresponds to 252–266 (RFDVSRGIKNRYFNS). Residues 267-287 (AFLGYTVGLTVTIIVMNWFQA) traverse the membrane as a helical segment. Residues 288 to 290 (AQP) are Lumenal-facing. The PAL signature appears at 290 to 292 (PAL). Residues 291-311 (ALLYIVPGVIGFVAVHCLWNG) traverse the membrane as a helical segment. At 312–343 (EVKPLLEYNESKAEEEDAVEEDTDSKQNKKEE) the chain is on the cytoplasmic side. The tract at residues 322–343 (SKAEEEDAVEEDTDSKQNKKEE) is disordered. Acidic residues predominate over residues 324–334 (AEEEDAVEEDT). The short motif at 340–343 (KKEE) is the Endoplasmic reticulum targeting signal element.

The protein belongs to the peptidase A22B family. In terms of tissue distribution, ubiquitous.

It is found in the endoplasmic reticulum membrane. Intramembrane-cleaving aspartic protease (I-CLiP) that cleaves type II membrane signal peptides in the hydrophobic plane of the membrane. Catalyzes intramembrane proteolysis of some signal peptides after they have been cleaved from a preprotein, resulting in the release of the fragment from the ER membrane into the cytoplasm. The sequence is that of Signal peptide peptidase 1 (SPP1) from Oryza sativa subsp. japonica (Rice).